A 96-amino-acid polypeptide reads, in one-letter code: Aspartyl/glutamyl-tRNA(Asn/Gln) amidotransferase subunit C (96 aa).

It belongs to the GatC family. As to quaternary structure, heterotrimer of A, B and C subunits.

The enzyme catalyses L-glutamyl-tRNA(Gln) + L-glutamine + ATP + H2O = L-glutaminyl-tRNA(Gln) + L-glutamate + ADP + phosphate + H(+). It carries out the reaction L-aspartyl-tRNA(Asn) + L-glutamine + ATP + H2O = L-asparaginyl-tRNA(Asn) + L-glutamate + ADP + phosphate + 2 H(+). Functionally, allows the formation of correctly charged Asn-tRNA(Asn) or Gln-tRNA(Gln) through the transamidation of misacylated Asp-tRNA(Asn) or Glu-tRNA(Gln) in organisms which lack either or both of asparaginyl-tRNA or glutaminyl-tRNA synthetases. The reaction takes place in the presence of glutamine and ATP through an activated phospho-Asp-tRNA(Asn) or phospho-Glu-tRNA(Gln). The polypeptide is Aspartyl/glutamyl-tRNA(Asn/Gln) amidotransferase subunit C (Geobacillus kaustophilus (strain HTA426)).